The chain runs to 438 residues: UDP-N-acetylmuramoylalanine--D-glutamate ligase (438 aa).

Position 115-121 (115-121 (GSNGKST)) interacts with ATP.

Belongs to the MurCDEF family.

Its subcellular location is the cytoplasm. It catalyses the reaction UDP-N-acetyl-alpha-D-muramoyl-L-alanine + D-glutamate + ATP = UDP-N-acetyl-alpha-D-muramoyl-L-alanyl-D-glutamate + ADP + phosphate + H(+). Its pathway is cell wall biogenesis; peptidoglycan biosynthesis. Functionally, cell wall formation. Catalyzes the addition of glutamate to the nucleotide precursor UDP-N-acetylmuramoyl-L-alanine (UMA). This is UDP-N-acetylmuramoylalanine--D-glutamate ligase from Vibrio atlanticus (strain LGP32) (Vibrio splendidus (strain Mel32)).